A 226-amino-acid polypeptide reads, in one-letter code: ATP synthase subunit a (226 aa).

5 helical membrane-spanning segments follow: residues 20–40 (LNWFSTFIGLLIIPSTFWLMP), 74–94 (FVSLFSLIMFNNFLGLFPYIF), 100–120 (LTLTLTLAFPLWLSFMLYGWI), 162–182 (LTANMIAGHLLMTLLGNTGPM), and 187–207 (IILSMILITQIALLVLESAVA).

The protein belongs to the ATPase A chain family. F-type ATPases have 2 components, CF(1) - the catalytic core - and CF(0) - the membrane proton channel. CF(1) has five subunits: alpha(3), beta(3), gamma(1), delta(1), epsilon(1). CF(0) has three main subunits: a, b and c.

The protein localises to the mitochondrion inner membrane. Functionally, mitochondrial membrane ATP synthase (F(1)F(0) ATP synthase or Complex V) produces ATP from ADP in the presence of a proton gradient across the membrane which is generated by electron transport complexes of the respiratory chain. F-type ATPases consist of two structural domains, F(1) - containing the extramembraneous catalytic core and F(0) - containing the membrane proton channel, linked together by a central stalk and a peripheral stalk. During catalysis, ATP synthesis in the catalytic domain of F(1) is coupled via a rotary mechanism of the central stalk subunits to proton translocation. Key component of the proton channel; it may play a direct role in the translocation of protons across the membrane. This Aedes albopictus (Asian tiger mosquito) protein is ATP synthase subunit a (mt:ATPase6).